Reading from the N-terminus, the 354-residue chain is Putative F-box/kelch-repeat protein At5g03000 (354 aa).

The 50-residue stretch at 37–86 (PTVFSSLPDELILNCLARVSRFYRPSLSLVNKEFQSLIASPDLEATRSRI) folds into the F-box domain. Kelch repeat units lie at residues 143 to 189 (EIYI…VIDG) and 190 to 236 (KIYV…FPGK).

This is Putative F-box/kelch-repeat protein At5g03000 from Arabidopsis thaliana (Mouse-ear cress).